The following is a 175-amino-acid chain: Gamma-crystallin B (175 aa).

Beta/gamma crystallin 'Greek key' domains lie at 2–40 and 41–83; these read GKITFFEDRSFQGRCYECSSDCPNLQTYFSRCNSVRVDS and GCWM…CLIP. A connecting peptide region spans residues 84–88; the sequence is QHSGT. 2 Beta/gamma crystallin 'Greek key' domains span residues 89-129 and 130-172; these read YRMR…NVME and GCWV…RRVM.

Belongs to the beta/gamma-crystallin family.

Its function is as follows. Crystallins are the dominant structural components of the vertebrate eye lens. This is Gamma-crystallin B (Crygb) from Mus musculus (Mouse).